Consider the following 244-residue polypeptide: tRNA (guanine-N(1)-)-methyltransferase (244 aa).

S-adenosyl-L-methionine is bound by residues glycine 110 and 129–134; that span reads IGDYIL.

It belongs to the RNA methyltransferase TrmD family. Homodimer.

The protein localises to the cytoplasm. The catalysed reaction is guanosine(37) in tRNA + S-adenosyl-L-methionine = N(1)-methylguanosine(37) in tRNA + S-adenosyl-L-homocysteine + H(+). Specifically methylates guanosine-37 in various tRNAs. In Syntrophomonas wolfei subsp. wolfei (strain DSM 2245B / Goettingen), this protein is tRNA (guanine-N(1)-)-methyltransferase.